An 874-amino-acid polypeptide reads, in one-letter code: Alanine--tRNA ligase (874 aa).

H564, H568, C665, and H669 together coordinate Zn(2+).

This sequence belongs to the class-II aminoacyl-tRNA synthetase family. Requires Zn(2+) as cofactor.

It is found in the cytoplasm. The enzyme catalyses tRNA(Ala) + L-alanine + ATP = L-alanyl-tRNA(Ala) + AMP + diphosphate. Its function is as follows. Catalyzes the attachment of alanine to tRNA(Ala) in a two-step reaction: alanine is first activated by ATP to form Ala-AMP and then transferred to the acceptor end of tRNA(Ala). Also edits incorrectly charged Ser-tRNA(Ala) and Gly-tRNA(Ala) via its editing domain. This Cupriavidus necator (strain ATCC 17699 / DSM 428 / KCTC 22496 / NCIMB 10442 / H16 / Stanier 337) (Ralstonia eutropha) protein is Alanine--tRNA ligase.